Here is a 628-residue protein sequence, read N- to C-terminus: Beta-galactosidase large subunit (628 aa).

E468 acts as the Proton donor in catalysis. The active-site Nucleophile is E536.

The protein belongs to the glycosyl hydrolase 2 family. Heterodimer of a large (LacL) and a small subunit (LacM).

It carries out the reaction Hydrolysis of terminal non-reducing beta-D-galactose residues in beta-D-galactosides.. Functionally, component of a beta-galactosidase. The protein is Beta-galactosidase large subunit (lacL) of Lactobacillus acidophilus (strain ATCC 700396 / NCK56 / N2 / NCFM).